The chain runs to 97 residues: Coiled-coil domain-containing protein 167 (97 aa).

Residues threonine 2–threonine 78 are a coiled coil. Residues threonine 78–tryptophan 95 form a helical membrane-spanning segment.

It is found in the membrane. This chain is Coiled-coil domain-containing protein 167 (Ccdc167), found in Mus musculus (Mouse).